A 692-amino-acid polypeptide reads, in one-letter code: Sodium- and chloride-dependent glycine transporter 1 (692 aa).

The tract at residues 1–34 is disordered; sequence MIGGDTRAASAHPGMASAQGPVATPSPEQPFPGT. The Cytoplasmic segment spans residues 1-94; it reads MIGGDTRAAS…TRGNWGNQIE (94 aa). 3 helical membrane passes run 95–115, 122–142, and 174–194; these read FVLT…FPYL, GAFM…LFFM, and VSTY…YYFF. At 195–271 the chain is on the extracellular side; that stretch reads SSMTHVLPWA…LSDDIGNFGE (77 aa). Transmembrane regions (helical) follow at residues 272–292, 301–321, 346–366, 393–413, 436–456, 492–512, 516–536, 556–576, and 596–616; these read VRLP…LCLI, VVYF…VRGV, VWGD…GGLI, SVYA…HLGV, LLPI…LLGL, VAGF…WLLL, YAAS…IMYI, LFFQ…ILIF, and VAIG…YALF. Residues 617 to 692 lie on the Cytoplasmic side of the membrane; sequence QLCRTDGDTL…GSSRFQDSRI (76 aa). Thr657 is modified (phosphothreonine). Phosphoserine is present on residues Ser659 and Ser684. Residues 681–692 form an essential for interaction with EXOC1 region; the sequence is SNGSSRFQDSRI.

This sequence belongs to the sodium:neurotransmitter symporter (SNF) (TC 2.A.22) family. SLC6A9 subfamily. In terms of assembly, interacts with EXOC1; interaction increases the transporter capacity of SLC6A9 probably by promoting its insertion into the cell membrane. Interacts with EXOC3 and EXOC4. Expressed in the brain (at protein level). At 11 dpc, expressed in the ventral part of the ventricular zone. At 15 dpc, also expressed in adjacent mantle tissue and the meninges. Strongly expressed in 12 dpc and 15 dpc liver. As to expression, expressed in the brain.

The protein resides in the cell membrane. It carries out the reaction glycine(out) + chloride(out) + 2 Na(+)(out) = glycine(in) + chloride(in) + 2 Na(+)(in). Functionally, sodium- and chloride-dependent glycine transporter which is essential for regulating glycine concentrations at inhibitory glycinergic synapses. Its function is as follows. Sodium- and chloride-dependent glycine transporter. In Mus musculus (Mouse), this protein is Sodium- and chloride-dependent glycine transporter 1 (Slc6a9).